A 346-amino-acid chain; its full sequence is fMet-Leu-Phe receptor (346 aa).

N-linked (GlcNAc...) asparagine glycans are attached at residues N1 and N7. Residues 1 to 24 (NSSLPTNISGGTPAVSAGYLFLDI) are Extracellular-facing. Residues 25 to 47 (ITYLVYAVTFVLGVLGNGLVIWV) form a helical membrane-spanning segment. Residues 48-58 (AGFRMTHTVTT) are Cytoplasmic-facing. The chain crosses the membrane as a helical span at residues 59 to 80 (ISYLNLAVADFCFTSTLPFFMV). Topologically, residues 81–97 (RKAMGGHWPFGWFLCKF) are extracellular. An intrachain disulfide couples C95 to C173. A helical transmembrane segment spans residues 98–118 (IFTIVDINLFGSVFLIALIAL). Residues 119 to 137 (DRCVCVLHPVWTQNHRTVS) lie on the Cytoplasmic side of the membrane. A helical transmembrane segment spans residues 138 to 159 (LAKKVIIGPWVMALLLTLPVII). Residues 160 to 202 (RVTTVPGKMGTVSCTFNFSPWTNDPKERIKVAIAMLTVRGIIR) lie on the Extracellular side of the membrane. The chain crosses the membrane as a helical span at residues 203 to 223 (FIIGFSAPMSIVAVSYGLIAT). Residues 224 to 239 (KIHKQGLIKSSRPLRV) are Cytoplasmic-facing. A helical membrane pass occupies residues 240-263 (LSFVAAAFFLCWSPYQVVAFIATV). The Extracellular portion of the chain corresponds to 264–282 (RIRELLQGMYKEISIAVDV). The chain crosses the membrane as a helical span at residues 283–302 (TSALAFFNSCLNPMLYVFMG). At 303–346 (QDFRERLIHSLPASLERALTEASTQTSDTATNSTLPSAEVALQA) the chain is on the cytoplasmic side. Polar residues predominate over residues 324-338 (ASTQTSDTATNSTLP). Residues 324 to 346 (ASTQTSDTATNSTLPSAEVALQA) are disordered.

Belongs to the G-protein coupled receptor 1 family. In terms of processing, phosphorylated; which is necessary for desensitization.

The protein localises to the cell membrane. Functionally, high affinity receptor for N-formyl-methionyl peptides (fMLP), which are powerful neutrophil chemotactic factors. Binding of fMLP to the receptor stimulates intracellular calcium mobilization and superoxide anion release. This response is mediated via a G-protein that activates a phosphatidylinositol-calcium second messenger system. Receptor for TAFA4, mediates its effects on chemoattracting macrophages, promoting phagocytosis and increasing ROS release. Receptor for cathepsin CTSG, leading to increased phagocyte chemotaxis. The polypeptide is fMet-Leu-Phe receptor (FPR1) (Pongo pygmaeus (Bornean orangutan)).